Consider the following 246-residue polypeptide: UPF0758 protein SSU98_1084 (246 aa).

Residues 103 to 225 (RILGSEKLGR…YYSFREESDV (123 aa)) form the MPN domain. The Zn(2+) site is built by His-174, His-176, and Asp-187. The JAMM motif motif lies at 174–187 (HNHPSGSVQPSRND).

This sequence belongs to the UPF0758 family.

In Streptococcus suis (strain 98HAH33), this protein is UPF0758 protein SSU98_1084.